Here is a 1343-residue protein sequence, read N- to C-terminus: DNA-directed RNA polymerase subunit beta (1343 aa).

Belongs to the RNA polymerase beta chain family. As to quaternary structure, the RNAP catalytic core consists of 2 alpha, 1 beta, 1 beta' and 1 omega subunit. When a sigma factor is associated with the core the holoenzyme is formed, which can initiate transcription.

The catalysed reaction is RNA(n) + a ribonucleoside 5'-triphosphate = RNA(n+1) + diphosphate. Its function is as follows. DNA-dependent RNA polymerase catalyzes the transcription of DNA into RNA using the four ribonucleoside triphosphates as substrates. The sequence is that of DNA-directed RNA polymerase subunit beta from Shewanella baltica (strain OS223).